A 355-amino-acid chain; its full sequence is Cyclin-D1-binding protein 1 (355 aa).

Alanine 2 is subject to N-acetylalanine. 2 interaction with TCF3 regions span residues 2-181 and 147-355; these read ASST…VDLV and ISCN…AVEL. The interval 2 to 187 is interaction with RPLP0; it reads ASSTTPVSFL…VDLVKDAHEE (186 aa). The interval 2-205 is required for interaction with CCND1; it reads ASSTTPVSFL…DPYCGLLDDS (204 aa). Residues 203 to 224 are disordered; sequence DDSEDNSDSHHNEDGVGLPSNR. The tract at residues 235–355 is interaction with RPLP0; the sequence is LITPCLALVR…KELTQRAVEL (121 aa).

The protein belongs to the CCNDBP1 family. Interacts with CCND1 and GRAP2. May also interact with COPS5, RPLP0, SIRT6, SYF2 and TCF3. Post-translationally, phosphorylated.

Its subcellular location is the cytoplasm. It localises to the nucleus. In terms of biological role, may negatively regulate cell cycle progression. May act at least in part via inhibition of the cyclin-D1/CDK4 complex, thereby preventing phosphorylation of RB1 and blocking E2F-dependent transcription. The sequence is that of Cyclin-D1-binding protein 1 (Ccndbp1) from Rattus norvegicus (Rat).